The primary structure comprises 297 residues: Homoserine kinase (297 aa).

Residue 79–89 (PIARGLGSSGA) participates in ATP binding.

The protein belongs to the GHMP kinase family. Homoserine kinase subfamily.

Its subcellular location is the cytoplasm. It carries out the reaction L-homoserine + ATP = O-phospho-L-homoserine + ADP + H(+). Its pathway is amino-acid biosynthesis; L-threonine biosynthesis; L-threonine from L-aspartate: step 4/5. Its function is as follows. Catalyzes the ATP-dependent phosphorylation of L-homoserine to L-homoserine phosphate. This Pyrobaculum neutrophilum (strain DSM 2338 / JCM 9278 / NBRC 100436 / V24Sta) (Thermoproteus neutrophilus) protein is Homoserine kinase.